The sequence spans 404 residues: Multidrug resistance protein MdtG (404 aa).

The next 11 membrane-spanning stretches (helical) occupy residues 19-39 (LGCFLTGAAFSLVMPFLPLYV), 56-76 (LVFSITFLFSAIASPFWGGLA), 90-110 (LGMAIVMLLMGMAQNIWQFLI), 113-133 (ALLGLLGGFILNANALIATQV), 144-164 (TLSTGGVSGALLGPLAGGLLA), 171-191 (PVFFITASVLFICFLLTFFFI), 222-242 (LFVTTLIIQVATGSIAPILTL), 254-274 (IAFISGMIASVPGVAALLSAP), 288-308 (ILIVALIISVLLLIPMSFVQT), 317-337 (FLLGAADGALLPAVQTLLVYN), and 376-396 (AVFCVTAGVVLFNAIYSWNSL).

This sequence belongs to the major facilitator superfamily. DHA1 family. MdtG (TC 2.A.1.2.20) subfamily.

The protein localises to the cell inner membrane. The chain is Multidrug resistance protein MdtG from Salmonella choleraesuis (strain SC-B67).